Here is a 553-residue protein sequence, read N- to C-terminus: Cytokine-like nuclear factor N-PAC (553 aa).

In terms of domain architecture, PWWP spans 8–66 (LGDLVWGKLGRYPPWPGKIVNPPKDLKKPRGKKCFFVKFFGTEDHAWIKVEQLKPYHAH). Basic and acidic residues-rich tracts occupy residues 92–145 (RAKG…EGKK) and 162–182 (RAQE…KDLT). The disordered stretch occupies residues 92–188 (RAKGKDQTSS…KDLTIPESST (97 aa)). Phosphoserine is present on Ser-130. Lys-135 participates in a covalent cross-link: Glycyl lysine isopeptide (Lys-Gly) (interchain with G-Cter in SUMO2). A Phosphoserine modification is found at Ser-167. A DNA-binding region (a.T hook) is located at residues 168–180 (PRKRGRPPKDEKD). Residues Lys-176, Lys-179, Lys-201, and Lys-211 each participate in a glycyl lysine isopeptide (Lys-Gly) (interchain with G-Cter in SUMO2) cross-link. Positions 214-217 (DPHF) are interaction with histone H3. The tract at residues 216–225 (HFHHFLLSQT) is interaction with KDM1B. Residues Lys-227, Lys-237, Lys-240, and Lys-269 each participate in a glycyl lysine isopeptide (Lys-Gly) (interchain with G-Cter in SUMO2) cross-link. The interval 261 to 553 (GSITPTDKKI…MSAVYRAYIH (293 aa)) is dehydrogenase domain. Residue 271-285 (GFLGLGLMGSGIVSN) participates in NAD(+) binding. A Glycyl lysine isopeptide (Lys-Gly) (interchain with G-Cter in SUMO2) cross-link involves residue Lys-302. NAD(+)-binding residues include Thr-362 and Lys-505. Phosphoserine is present on Ser-540.

The protein belongs to the HIBADH-related family. NP60 subfamily. As to quaternary structure, homotetramere. Interacts with MAPK14. Interacts with KDM1B at nucleosomes; this interaction stimulates H3K4me1 and H3K4me2 demethylation. Binds to mononucleosomes. Interacts with GATA4; the interaction is required for a synergistic activation of GATA4 target genes transcription.

The protein localises to the nucleus. It is found in the chromosome. In terms of biological role, cytokine-like nuclear factor with chromatin gene reader activity involved in chromatin modification and regulation of gene expression. Acts as a nucleosome-destabilizing factor that is recruited to genes during transcriptional activation. Recognizes and binds histone H3 without a preference for specific epigenetic markers and also binds DNA. Interacts with KDM1B and promotes its histone demethylase activity by facilitating the capture of H3 tails, they form a multifunctional enzyme complex that modifies transcribed chromatin and facilitates Pol II transcription through nucleosomes. Stimulates the acetylation of 'Lys-56' of nucleosomal histone H3 (H3K56ac) by EP300. With GATA4, co-binds a defined set of heart development genes and coregulates their expression during cardiomyocyte differentiation. Regulates p38 MAP kinase activity by mediating stress activation of MAPK14/p38alpha and specifically regulating MAPK14 signaling. Indirectly promotes phosphorylation of MAPK14 and activation of ATF2. The phosphorylation of MAPK14 requires upstream activity of MAP2K4 and MAP2K6. This chain is Cytokine-like nuclear factor N-PAC (GLYR1), found in Pongo abelii (Sumatran orangutan).